The primary structure comprises 245 residues: Proteasome subunit alpha type-7-1B (245 aa).

This sequence belongs to the peptidase T1A family. As to quaternary structure, the 26S proteasome consists of a 20S proteasome core and two 19S regulatory subunits. The 20S proteasome core is composed of 28 subunits that are arranged in four stacked rings, resulting in a barrel-shaped structure. The two end rings are each formed by seven alpha subunits, and the two central rings are each formed by seven beta subunits. The catalytic chamber with the active sites is on the inside of the barrel. In terms of tissue distribution, testis specific.

Its subcellular location is the cytoplasm. It localises to the nucleus. The proteasome is a multicatalytic proteinase complex which is characterized by its ability to cleave peptides with Arg, Phe, Tyr, Leu, and Glu adjacent to the leaving group at neutral or slightly basic pH. The proteasome has an ATP-dependent proteolytic activity. The sequence is that of Proteasome subunit alpha type-7-1B (Pros28.1B) from Drosophila virilis (Fruit fly).